A 64-amino-acid chain; its full sequence is Protein DsrB (64 aa).

The protein belongs to the DsrB family.

The polypeptide is Protein DsrB (Salmonella enteritidis PT4 (strain P125109)).